The chain runs to 249 residues: Secreted flagellin C (249 aa).

In terms of processing, the secreted form is about 1 kDa larger than the whole cell lysate form, presumably due to post-translational modification. A 22 kDa form is also found in the secreted fraction, probably resulting from proteolysis.

The protein resides in the secreted. The protein localises to the host cell surface. Plays a role in virulence. The chain is Secreted flagellin C (flaC) from Campylobacter jejuni subsp. jejuni serotype O:2 (strain ATCC 700819 / NCTC 11168).